Consider the following 267-residue polypeptide: Tryptophan 2,3-dioxygenase (267 aa).

Residues 44–48 and arginine 114 contribute to the substrate site; that span reads FITIH. Position 225 (histidine 225) interacts with heme. Threonine 239 is a binding site for substrate.

This sequence belongs to the tryptophan 2,3-dioxygenase family. As to quaternary structure, homotetramer. Requires heme as cofactor.

It catalyses the reaction L-tryptophan + O2 = N-formyl-L-kynurenine. Its pathway is amino-acid degradation; L-tryptophan degradation via kynurenine pathway; L-kynurenine from L-tryptophan: step 1/2. Heme-dependent dioxygenase that catalyzes the oxidative cleavage of the L-tryptophan (L-Trp) pyrrole ring and converts L-tryptophan to N-formyl-L-kynurenine. Catalyzes the oxidative cleavage of the indole moiety. This is Tryptophan 2,3-dioxygenase from Nocardioides sp. (strain ATCC BAA-499 / JS614).